Consider the following 101-residue polypeptide: Small ribosomal subunit protein uS14c (101 aa).

The protein belongs to the universal ribosomal protein uS14 family. In terms of assembly, part of the 30S ribosomal subunit.

The protein localises to the plastid. Binds 16S rRNA, required for the assembly of 30S particles. In Helicosporidium sp. subsp. Simulium jonesii (Green alga), this protein is Small ribosomal subunit protein uS14c.